Here is a 238-residue protein sequence, read N- to C-terminus: Ribonuclease PH (238 aa).

Phosphate contacts are provided by residues R86 and 124-126; that span reads GTR.

Belongs to the RNase PH family. As to quaternary structure, homohexameric ring arranged as a trimer of dimers.

It catalyses the reaction tRNA(n+1) + phosphate = tRNA(n) + a ribonucleoside 5'-diphosphate. In terms of biological role, phosphorolytic 3'-5' exoribonuclease that plays an important role in tRNA 3'-end maturation. Removes nucleotide residues following the 3'-CCA terminus of tRNAs; can also add nucleotides to the ends of RNA molecules by using nucleoside diphosphates as substrates, but this may not be physiologically important. Probably plays a role in initiation of 16S rRNA degradation (leading to ribosome degradation) during starvation. The polypeptide is Ribonuclease PH (Haemophilus ducreyi (strain 35000HP / ATCC 700724)).